We begin with the raw amino-acid sequence, 144 residues long: Large ribosomal subunit protein uL11 (144 aa).

It belongs to the universal ribosomal protein uL11 family. In terms of assembly, part of the ribosomal stalk of the 50S ribosomal subunit. Interacts with L10 and the large rRNA to form the base of the stalk. L10 forms an elongated spine to which L12 dimers bind in a sequential fashion forming a multimeric L10(L12)X complex. In terms of processing, one or more lysine residues are methylated.

Functionally, forms part of the ribosomal stalk which helps the ribosome interact with GTP-bound translation factors. The polypeptide is Large ribosomal subunit protein uL11 (Marinomonas sp. (strain MWYL1)).